A 453-amino-acid chain; its full sequence is Serine incorporator 1 (453 aa).

Glycine 2 is lipidated: N-myristoyl glycine. Residues 2-39 (GSVLGLCSMASWIPCLCGSAPCLLCRCCPSGNNSTVTR) are Cytoplasmic-facing. Residues 40–60 (LIYALFLLVGVCVACVMLIPG) traverse the membrane as a helical segment. Topologically, residues 61–88 (MEEQLNKIPGFCENEKGMVPCNILVGYK) are lumenal. Residues 89 to 109 (AVYRLCFGLAMFYLLLSLLMI) traverse the membrane as a helical segment. Residues 110–123 (KVKSSSDPRAAIHN) are Cytoplasmic-facing. A helical transmembrane segment spans residues 124-144 (GFWFFKFAAAIAIIIGAFFIP). At 145 to 151 (EGTFTTV) the chain is on the lumenal side. Residues 152-172 (WFYVGMAGAFCFILIQLVLLI) traverse the membrane as a helical segment. The Cytoplasmic segment spans residues 173-197 (DFAHSWNESWVEKMEEGNSRCWYAA). The chain crosses the membrane as a helical span at residues 198 to 218 (LLSATALNYLLSLVAVVLFFV). Residues 219–231 (YYTHPASCAENKA) lie on the Lumenal side of the membrane. Residues 232–252 (FISVNMLLCLGASIMSILPKI) form a helical membrane-spanning segment. The Cytoplasmic segment spans residues 253–259 (QESQPRS). The chain crosses the membrane as a helical span at residues 260–280 (GLLQSSVITVYTMYLTWSAMT). At 281-309 (NEPETECNPSLLNIIGYNTTSTVSKEGQS) the chain is on the lumenal side. The chain crosses the membrane as a helical span at residues 310-330 (VQWWHTQGIIGLILFLLCVFY). The Cytoplasmic segment spans residues 331–387 (SSIRTSNNSQVNKLTLTSDESTLIEDGGARNDGSLEDGDDVHRAVDNERDGVTYSYS). Serine 351 bears the Phosphoserine mark. Position 352 is a phosphothreonine (threonine 352). Serine 364 is modified (phosphoserine). Residues 388 to 408 (FFHFMLFLASLYIMMTLTNWY) form a helical membrane-spanning segment. Residues 409–426 (RYEPSREMKSQWTAVWVK) are Lumenal-facing. A helical membrane pass occupies residues 427–447 (ISSSWIGIVLYVWTLVAPLVL). The Cytoplasmic segment spans residues 448–453 (TNRDFD).

This sequence belongs to the TDE1 family. As to quaternary structure, interacts with SPTLC1.

It localises to the endoplasmic reticulum membrane. Its function is as follows. Enhances the incorporation of serine into phosphatidylserine and sphingolipids. The polypeptide is Serine incorporator 1 (SERINC1) (Bos taurus (Bovine)).